Reading from the N-terminus, the 606-residue chain is Elongation factor 4 (606 aa).

Residues 10 to 192 form the tr-type G domain; sequence ENIRNFSIIA…AIVQQLPAPK (183 aa). Residues 22 to 27 and 139 to 142 contribute to the GTP site; these read DHGKST and NKID.

This sequence belongs to the TRAFAC class translation factor GTPase superfamily. Classic translation factor GTPase family. LepA subfamily.

Its subcellular location is the cell membrane. The catalysed reaction is GTP + H2O = GDP + phosphate + H(+). Its function is as follows. Required for accurate and efficient protein synthesis under certain stress conditions. May act as a fidelity factor of the translation reaction, by catalyzing a one-codon backward translocation of tRNAs on improperly translocated ribosomes. Back-translocation proceeds from a post-translocation (POST) complex to a pre-translocation (PRE) complex, thus giving elongation factor G a second chance to translocate the tRNAs correctly. Binds to ribosomes in a GTP-dependent manner. The protein is Elongation factor 4 of Lawsonia intracellularis (strain PHE/MN1-00).